A 242-amino-acid polypeptide reads, in one-letter code: MSKSRLTVFSFVRRFLLRLMVVLAVFWGGGIALFSVAPVPFSAVMVERQVSAWLYGNFRYVAHSDWVSMDQISPWMGLAVIAAEDQKFPEHWGFDVASIEKALAHNERNENRIRGASTISQQTAKNLFLWDGRSWVRKGLEAGLTLGIETVWSKKRILTVYLNIAEFGDGVFGVEAAAQRYFHKPASKLTRSEAALLAAVLPNPLRFKVSSPSGYVRSRQAWILRQMYQLGGEPFMQQHQLD.

The helical transmembrane segment at 19–39 threads the bilayer; the sequence is LMVVLAVFWGGGIALFSVAPV.

It belongs to the glycosyltransferase 51 family.

It localises to the cell inner membrane. It catalyses the reaction [GlcNAc-(1-&gt;4)-Mur2Ac(oyl-L-Ala-gamma-D-Glu-L-Lys-D-Ala-D-Ala)](n)-di-trans,octa-cis-undecaprenyl diphosphate + beta-D-GlcNAc-(1-&gt;4)-Mur2Ac(oyl-L-Ala-gamma-D-Glu-L-Lys-D-Ala-D-Ala)-di-trans,octa-cis-undecaprenyl diphosphate = [GlcNAc-(1-&gt;4)-Mur2Ac(oyl-L-Ala-gamma-D-Glu-L-Lys-D-Ala-D-Ala)](n+1)-di-trans,octa-cis-undecaprenyl diphosphate + di-trans,octa-cis-undecaprenyl diphosphate + H(+). Its pathway is cell wall biogenesis; peptidoglycan biosynthesis. Peptidoglycan polymerase that catalyzes glycan chain elongation from lipid-linked precursors. The sequence is that of Biosynthetic peptidoglycan transglycosylase from Escherichia coli (strain 55989 / EAEC).